A 324-amino-acid polypeptide reads, in one-letter code: Heat-inducible transcription repressor HrcA (324 aa).

Belongs to the HrcA family.

In terms of biological role, negative regulator of class I heat shock genes (grpE-dnaK-dnaJ and groELS operons). Prevents heat-shock induction of these operons. The sequence is that of Heat-inducible transcription repressor HrcA from Synechococcus sp. (strain CC9902).